The primary structure comprises 542 residues: Protein NODULATION SIGNALING PATHWAY 1 (542 aa).

Residues 73–150 are disordered; it reads TSTTSLEPCG…SNCNSGNSKE (78 aa). The span at 92-103 shows a compositional bias: basic and acidic residues; it reads LPKKRNATDESS. The span at 136 to 148 shows a compositional bias: low complexity; that stretch reads AKANGSNCNSGNS. The region spanning 145–532 is the GRAS domain; it reads SGNSKEGRWA…QPVSFCSLWK (388 aa). The leucine repeat I (LRI) stretch occupies residues 152 to 214; that stretch reads RWAEQLLNPC…HLSSSSSSPT (63 aa). Residues 233–332 are VHIID; it reads LLKFYEVSPW…GYNYYPRLLG (100 aa). A VHIID motif is present at residues 269-273; sequence LHILD. The leucine repeat II (LRII) stretch occupies residues 333-357; sequence YAQSININLQINRIENHSLQTLNAQ. The interval 367 to 452 is PFYRE; that stretch reads LIVCAQFRLH…RESDERRVME (86 aa). The interval 455–532 is SAW; the sequence is AAKALTNQRE…QPVSFCSLWK (78 aa).

It belongs to the GRAS family. Highly expressed in roots.

It localises to the nucleus. Functionally, transcriptional regulator essential for Nod-factor-induced gene expression. Acts downstream of calcium spiking and a calcium/calmodulin-dependent protein kinase required for activation of early nodulation gene expression. Acts as a common symbiosis gene that positively contributes to the early steps of the arbuscular mycorrhizal fungus and rhizobial infection processes in roots. Transcription factor involved in the positive regulation of the beta-carotene isomerase D27, which participates in a pathway leading to biosynthesis of strigolactones in roots. This Lotus japonicus (Lotus corniculatus var. japonicus) protein is Protein NODULATION SIGNALING PATHWAY 1.